We begin with the raw amino-acid sequence, 1296 residues long: Clustered mitochondria protein homolog (1296 aa).

The segment at 1 to 31 is disordered; that stretch reads MTLMNGDGAHEHQAEAEPKQNGHEMGDQTEE. Residues 8 to 26 show a composition bias toward basic and acidic residues; that stretch reads GAHEHQAEAEPKQNGHEMG. The Clu domain maps to 333-575; the sequence is RAEDAYTSRL…RTFPPDLNFL (243 aa). Residues 662-689 are a coiled coil; the sequence is LDGEAQLKQLEETMAAHKETVDTRSKEV. TPR repeat units lie at residues 970-1003, 1012-1045, 1096-1129, and 1138-1171; these read AFHFFQSGQAKVQQGYLKEGCELINEALNLFNNV, CACLRLLARLNYIMGDYSEALSNQQKAVLMSERI, ALLDSNIGLVLHGVMEYDLSLRFLENALTINSKY, and ALSHHLVARVYETKGEFRSALQHEKDGYTIYKNQ. Residues 1242 to 1274 adopt a coiled-coil conformation; that stretch reads QKDLEHLKAEVQRRQQLQEAIKGAENHEAKTKE. A disordered region spans residues 1261–1296; sequence AIKGAENHEAKTKEPEMSETSDSNINAASVAPESSD. Positions 1263-1276 are enriched in basic and acidic residues; it reads KGAENHEAKTKEPE. Positions 1278-1296 are enriched in polar residues; it reads SETSDSNINAASVAPESSD.

The protein belongs to the CLU family.

The protein resides in the cytoplasm. It localises to the cytoplasmic granule. Its function is as follows. mRNA-binding protein involved in proper cytoplasmic distribution of mitochondria. Specifically binds mRNAs of nuclear-encoded mitochondrial proteins in the cytoplasm and regulates transport or translation of these transcripts close to mitochondria, playing a role in mitochondrial biogenesis. This chain is Clustered mitochondria protein homolog, found in Xenopus tropicalis (Western clawed frog).